The following is a 2326-amino-acid chain: MLLSPGHPLSAPALALILTLALLVRSTAPASFFGENHLEVPVPSALTRVDLLLQFSTSQPEALLLLAAGQTDHLLLQLQSGHLQVRLALGQNELSLQTPADTVLSDSTTHTVVLTVSNSWAVLSVDGVLNTSAPIPKASHLKVPYGLFVGSSGSLDLPYLKGISRPLRGCLHSAILNGRNLLRPLTPDVHEGCAEEFSAGDEVGLGFSGPHSLAAFPAWSTREEGTLEFTLTTRSQQAPLAFQAGDKRGNFIYVDIFEGHLRAVVEKGQGTMLLRNSVPVADGQPHEVSVHIDVHRLEISVDQYPTRTFNRGVLSYLEPRGSLLLGGLDTEASRHLQEHRLGLTPGAANISLVGCIEDFSVNGRRLGLRDAWLTRDMAAGCRPEEDEYEEEVYGPFEAFSTLAPEAWPVMDLPEPCVPEPGLPAVFANFTQLLTISPLVVAEGGTAWLEWRHVQPTLDLTEAELRKSQVLFSVSQGARHGELELDIPGAQTRKMFTLLDVVNRKARFVHDGSEDTSDQLMLEVSVTSRAPVPSCLRRGQIYILPIQVNPVNDPPRIVFPHGSLMVILEHTQKPLGPEIFQAYDPDSACEGLTIQLLGVSASVPVEHRDQPGEPVTEFSCRDLEAGNIVYVHRGGPAQDLTFRVSDGMQASGPATLKVVAVRPAIQILHNTGLRLAQGSAAAILPANLSVETNAVGQDVSVLFRVTGTLQFGELQKQGAGGVEGTEWWDTLAFHQRDVEQGRVRYLSTDPQHHTQDTVEDLTLEVQVGQETLSNLSFPVTIQRATVWMLQLEPLHTQNPHQETLTSAHLEASLEEEGEGGPYPHIFHYELVQAPRRGNLLLQGTRLSDGQSFSQSDLQAGRVTYRATTRTSEAAEDSFRFRVTSPPHFSPLYTFPIHIGGDPNAPVLTNVLLMVPEGGEGVLSADHLFVKSLNSASYLYEVMEQPHHGSLAWRDPKGRATPVTSFTNEDLLHGRLVYQHDDSETIEDDIPFVATRQGEGSGDMAWEEVRGVFRVAIQPVNDHAPVQTISRVFHVARGGQRLLTTDDVAFSDADSGFSDAQLVLTRKDLLFGSIVAMEEPTRPIYRFTQEDLRKKQVLFVHSGADHGWLQLQVSDGQHQATAMLEVQASEPYLHVANSSSLVVPQGGQGTIDTAVLHLDTNLDIRSGNEVHYHVTAGPHWGQLLRDGQSVTSFSQRDLLDGAILYSHNGSLSPQDTLALSVAAGPVHTSTVLQVTIALEGPLAPLQLVQHKRIYVFQGEAAEIRRDQLEVVQEAVLPADIMFSLRSPPNAGYLVMVSHGASADGPPSLDPVQRFSQEAINSGRVLYLHSRPGAWSDSFSLDVASGLGDPLEGISVELEVLPTVIPLDVQNFSVPEGGTRTLAPPLIQITGPYLGTLPGLVLQVLEPPQHGALQKEDRPQDGTLSTFSWREVEEQLIRYVHDGSETQTDGFILLANASEMDRQSQPMAFTITILPVNDQPPVITTNTGLQIWEGAIVPIPPEALRGIDSDSGPEDLVYTIEQPSNGRIALRVAPDAEAHRFTQAQLDSGLVLFSHRGALEGGFHFDLSDGVHTSPGHFFRVVAQKQVLLSLEGSRKLTVCPESVQPLSSQSLSASSSTGSDPRHLLYQVVRGPQLGRLLHAQQGSAEEALVNFTQAEVNAGNILYEHEISSEPFWEAHDTIGLLLSSSPARDLAATLAVTVSFDAACPQRPSRLWRNKGLWVPEGQRAKITVAALDAANLLASVPASQRGRHDVLFQITQFPTRGQLLVSEEPLHARRPHFLQSELTAGQLVYAHGGGGTQQDGFRFRAHLQGPTGASVAGPQTSEAFVITVRDVNERPPQPQASIPLRITRGSRAPVSRAQLSVVDPDSAPGEIEYEVQRAPHNGFLSLAGDNTGPVTHFTQADVDAGRLAFVANGSSVAGVFQLSMSDGASPPIPMSLAVDVLPSTIEVQLRAPLEVPQALGRSSLSRQQLQVISDREEPDVAYRLTQGPLYGQVLVGGQPASAFSQLQVDQGDVVFAFTNFSSSQDHFKVLALARGVNASATVNVTVQALLHVWAGGPWPQGTTLRLDPTVLDASELANRTGSMPRFRLLEGPRYGRVVRVSQGRAESRTNQLVEDFTQQDLEEGRLGLEVGRPEGRSTGPTGDRLTLELQATGVPPAVALLDFATEPYHAAKFYKVTLLSVPEAARTETEKTGKSTPTGQPGQAASSPMPTVAKSGFLGFLEANMFSVIIPVCLVLLLLALILPLLFYLRKRNKTGKHDVQVLTAKPRNGLAGDTETFRKVEPGQAIPLTTVPGQGPPPGGQPDPELLQFCRTPNPALRNGQYWV.

Residues M1 to P29 form the signal peptide. Laminin G-like domains are found at residues A30–C193 and V203–C381. The interval A30–T640 is globular or compact configuration stabilized by disulfide bonds. Residues A30–T640 are neurite growth inhibition. Over A30–N2225 the chain is Extracellular. N-linked (GlcNAc...) asparagine glycosylation occurs at N130. Residues C170 and C193 are joined by a disulfide bond. A glycan (N-linked (GlcNAc...) asparagine) is linked at N349. C355 and C381 are oxidised to a cystine. The N-linked (GlcNAc...) asparagine glycan is linked to N428. CSPG repeat units follow at residues F429–S524, P554–G646, and A663–Q765. The tract at residues G575–D1044 is interaction with COL6A2. The interaction with COL5A1 stretch occupies residues R632–L1450. N-linked (GlcNAc...) asparagine glycans are attached at residues N686 and N773. CSPG repeat units follow at residues T784–T882 and N902–T993. O-linked (Xyl...) (chondroitin sulfate) serine glycosylation occurs at S999. CSPG repeat units lie at residues A1022 to G1114, Y1130 to A1220, P1242 to A1341, T1360 to N1453, P1477 to G1567, L1585 to S1683, P1708 to H1807, P1836 to G1928, and T1945 to L2033. Residues N1135 and N1206 are each glycosylated (N-linked (GlcNAc...) asparagine). N1368 and N1453 each carry an N-linked (GlcNAc...) asparagine glycan. A neurite growth inhibition region spans residues G1590–N2225. Residues S1591 to N2225 are cysteine-containing. N1649 is a glycosylation site (N-linked (GlcNAc...) asparagine). Residues N1913, N2020, N2038, N2044, and N2079 are each glycosylated (N-linked (GlcNAc...) asparagine). One copy of the CSPG 15 repeat lies at T2042–Q2151. Residues R2187 to M2210 form a disordered region. The span at K2195–M2210 shows a compositional bias: polar residues. Residues M2226–L2250 form a helical membrane-spanning segment. Residues R2251 to V2326 are Cytoplasmic-facing. Phosphothreonine; by PKC/PRKCA is present on T2256. The short motif at Y2324 to V2326 is the PDZ-binding element.

Interacts with GRIP1, GRIP2 and GRIA2. Forms a ternary complex with GRIP1 and GRIA2. Interacts with ITGA4 through its chondroitin sulfate glycosaminoglycan. Interacts with BCAR1, CDC42 and ACK1. Interacts with MMP16. Interacts with the first PDZ domain of MPDZ. Interacts with PRKCA. Interacts with LGALS3 and the integrin composed of ITGB1 and ITGA3. Binds TNC, laminin-1, COL5A1 and COL6A2. Interacts with PLG and angiostatin. Binds FGF2 and PDGFA. N-glycosylated. In terms of processing, O-glycosylated; contains glycosaminoglycan chondroitin sulfate which are required for proper localization and function in stress fiber formation. Involved in interaction with MMP16 and ITGA4. Post-translationally, phosphorylation by PRKCA regulates its subcellular location and function in cell motility. As to expression, neural cells and also extraneural tissues, especially in the developing mesenchyme.

It localises to the cell membrane. Its subcellular location is the apical cell membrane. The protein localises to the cell projection. The protein resides in the lamellipodium membrane. It is found in the cell surface. Proteoglycan playing a role in cell proliferation and migration which stimulates endothelial cells motility during microvascular morphogenesis. May also inhibit neurite outgrowth and growth cone collapse during axon regeneration. Cell surface receptor for collagen alpha 2(VI) which may confer cells ability to migrate on that substrate. Binds through its extracellular N-terminus growth factors, extracellular matrix proteases modulating their activity. May regulate MPP16-dependent degradation and invasion of type I collagen participating in melanoma cells invasion properties. May modulate the plasminogen system by enhancing plasminogen activation and inhibiting angiostatin. Also functions as a signal transducing protein by binding through its cytoplasmic C-terminus scaffolding and signaling proteins. May promote retraction fiber formation and cell polarization through Rho GTPase activation. May stimulate alpha-4, beta-1 integrin-mediated adhesion and spreading by recruiting and activating a signaling cascade through CDC42, ACK1 and BCAR1. May activate FAK and ERK1/ERK2 signaling cascades. The sequence is that of Chondroitin sulfate proteoglycan 4 (Cspg4) from Rattus norvegicus (Rat).